An 88-amino-acid chain; its full sequence is Large ribosomal subunit protein bL27 (88 aa).

Residues 1–13 show a composition bias toward polar residues; it reads MATKKGASSSSNG. A disordered region spans residues 1 to 23; that stretch reads MATKKGASSSSNGRDSEAKRLGV.

The protein belongs to the bacterial ribosomal protein bL27 family.

This Corynebacterium urealyticum (strain ATCC 43042 / DSM 7109) protein is Large ribosomal subunit protein bL27.